The sequence spans 175 residues: Shikimate kinase (175 aa).

11–16 (GAGKTT) contributes to the ATP binding site. Threonine 15 contacts Mg(2+). Substrate is bound by residues aspartate 33, arginine 57, and glycine 79. Position 118 (arginine 118) interacts with ATP. Arginine 140 serves as a coordination point for substrate.

The protein belongs to the shikimate kinase family. Monomer. It depends on Mg(2+) as a cofactor.

Its subcellular location is the cytoplasm. The enzyme catalyses shikimate + ATP = 3-phosphoshikimate + ADP + H(+). It participates in metabolic intermediate biosynthesis; chorismate biosynthesis; chorismate from D-erythrose 4-phosphate and phosphoenolpyruvate: step 5/7. Functionally, catalyzes the specific phosphorylation of the 3-hydroxyl group of shikimic acid using ATP as a cosubstrate. This chain is Shikimate kinase, found in Bacteroides thetaiotaomicron (strain ATCC 29148 / DSM 2079 / JCM 5827 / CCUG 10774 / NCTC 10582 / VPI-5482 / E50).